A 264-amino-acid polypeptide reads, in one-letter code: 3-methyl-2-oxobutanoate hydroxymethyltransferase (264 aa).

Residues Asp-45 and Asp-84 each contribute to the Mg(2+) site. 3-methyl-2-oxobutanoate contacts are provided by residues 45-46 (DS), Asp-84, and Lys-113. Residue Glu-115 participates in Mg(2+) binding. The Proton acceptor role is filled by Glu-182.

The protein belongs to the PanB family. In terms of assembly, homodecamer; pentamer of dimers. Mg(2+) serves as cofactor.

The protein localises to the cytoplasm. It carries out the reaction 3-methyl-2-oxobutanoate + (6R)-5,10-methylene-5,6,7,8-tetrahydrofolate + H2O = 2-dehydropantoate + (6S)-5,6,7,8-tetrahydrofolate. It functions in the pathway cofactor biosynthesis; (R)-pantothenate biosynthesis; (R)-pantoate from 3-methyl-2-oxobutanoate: step 1/2. Catalyzes the reversible reaction in which hydroxymethyl group from 5,10-methylenetetrahydrofolate is transferred onto alpha-ketoisovalerate to form ketopantoate. The chain is 3-methyl-2-oxobutanoate hydroxymethyltransferase from Caldicellulosiruptor saccharolyticus (strain ATCC 43494 / DSM 8903 / Tp8T 6331).